Here is a 931-residue protein sequence, read N- to C-terminus: Isoleucine--tRNA ligase (931 aa).

Residues 1–14 (MDYSKTLNLPQTQF) are compositionally biased toward polar residues. The interval 1–25 (MDYSKTLNLPQTQFPMRGNLPQREP) is disordered. A 'HIGH' region motif is present at residues 57 to 67 (PYANGHIHLGH). Glu559 is a binding site for L-isoleucyl-5'-AMP. The 'KMSKS' region motif lies at 600-604 (KMSKS). An ATP-binding site is contributed by Lys603. Cys898, Cys901, Cys918, and Cys921 together coordinate Zn(2+).

This sequence belongs to the class-I aminoacyl-tRNA synthetase family. IleS type 1 subfamily. Monomer. Zn(2+) serves as cofactor.

It is found in the cytoplasm. It carries out the reaction tRNA(Ile) + L-isoleucine + ATP = L-isoleucyl-tRNA(Ile) + AMP + diphosphate. Catalyzes the attachment of isoleucine to tRNA(Ile). As IleRS can inadvertently accommodate and process structurally similar amino acids such as valine, to avoid such errors it has two additional distinct tRNA(Ile)-dependent editing activities. One activity is designated as 'pretransfer' editing and involves the hydrolysis of activated Val-AMP. The other activity is designated 'posttransfer' editing and involves deacylation of mischarged Val-tRNA(Ile). The protein is Isoleucine--tRNA ligase of Desulforamulus reducens (strain ATCC BAA-1160 / DSM 100696 / MI-1) (Desulfotomaculum reducens).